Consider the following 192-residue polypeptide: ATP-dependent Clp protease proteolytic subunit 1 (192 aa).

Ser-92 (nucleophile) is an active-site residue. Residue His-117 is part of the active site.

The protein belongs to the peptidase S14 family. Fourteen ClpP subunits assemble into 2 heptameric rings which stack back to back to give a disk-like structure with a central cavity, resembling the structure of eukaryotic proteasomes.

Its subcellular location is the cytoplasm. The enzyme catalyses Hydrolysis of proteins to small peptides in the presence of ATP and magnesium. alpha-casein is the usual test substrate. In the absence of ATP, only oligopeptides shorter than five residues are hydrolyzed (such as succinyl-Leu-Tyr-|-NHMec, and Leu-Tyr-Leu-|-Tyr-Trp, in which cleavage of the -Tyr-|-Leu- and -Tyr-|-Trp bonds also occurs).. Its function is as follows. Cleaves peptides in various proteins in a process that requires ATP hydrolysis. Has a chymotrypsin-like activity. Plays a major role in the degradation of misfolded proteins. In Chlamydia trachomatis serovar D (strain ATCC VR-885 / DSM 19411 / UW-3/Cx), this protein is ATP-dependent Clp protease proteolytic subunit 1.